A 264-amino-acid chain; its full sequence is MARGLKKHLKRLNAPKHWMLDKLGGAFAPKPSSGPHKSRECLPLVIIMRNRLKYALTYREVISILMQRQVMVDGKVRTDKTYPAGFMDVVSIPKTNENFRLLYDTKGRFRLHSLRDEESKFKLCKVRSVQFGQKGIPYLNTYDGRTIRYPDPLIKANDTIKLDLESNKIVDFIKFDVGNVVMVTGGRNRGRVGVIKNREKHKGSFETLHIQDSQGHEFATRLGNVFTLGKGTKPWVSLPKGKGIKLTIIEDARKRLAAQSATPA.

In terms of domain architecture, S4 RNA-binding spans 42-104 (LPLVIIMRNR…TNENFRLLYD (63 aa)).

It belongs to the eukaryotic ribosomal protein eS4 family.

The protein localises to the cytoplasm. The polypeptide is Small ribosomal subunit protein eS4 (RPS4) (Solanum tuberosum (Potato)).